The chain runs to 65 residues: uncharacterized protein (65 aa).

This is an uncharacterized protein from Saccharomyces cerevisiae (strain ATCC 204508 / S288c) (Baker's yeast).